A 100-amino-acid chain; its full sequence is Protamine-2 (100 aa).

The disordered stretch occupies residues 1–45 (MVRYHVRSPSERPHREYRQLVNGQEQGRHGQEEQGMSAEGVEGYG). 3 positions are modified to phosphoserine: Ser-8, Ser-10, and Ser-37. Residues 8–18 (SPSERPHREYR) show a composition bias toward basic and acidic residues.

This sequence belongs to the protamine P2 family. As to quaternary structure, interacts with TDRP. Proteolytic processing into mature chains is required for histone eviction during spermatogenesis. Transition proteins (TNP1 and TNP2) are required for processing. Testis.

The protein resides in the nucleus. The protein localises to the chromosome. Protamines substitute for histones in the chromatin of sperm during the haploid phase of spermatogenesis. They compact sperm DNA into a highly condensed, stable and inactive complex. The chain is Protamine-2 (PRM2) from Alouatta seniculus (Red howler monkey).